The primary structure comprises 2102 residues: Mediator of RNA polymerase II transcription subunit 13-like (2102 aa).

Disordered stretches follow at residues 304 to 335 (SYAG…EEAQ), 432 to 487 (QRAC…QPSL), 514 to 587 (VTSS…LDPL), 689 to 758 (SSAV…TTSL), 776 to 819 (NSDE…DLHQ), and 947 to 1034 (SVVE…SSVE). Positions 439 to 450 (GHPPSAGQPPQP) are enriched in pro residues. A compositionally biased stretch (basic and acidic residues) spans 455 to 467 (KMAEKLEKGDKQQ). A compositionally biased stretch (acidic residues) spans 693–714 (CDEDPEQESDPYAFEEGDEEFN). Composition is skewed to basic and acidic residues over residues 715–737 (FSDK…REDG) and 794–804 (AEEKFGGKEPK). The segment covering 947–974 (SVVEQEQSCTPQTHNTFMSNSAPPSNSG) has biased composition (polar residues). The span at 979-990 (PSPATPRISAPT) shows a compositional bias: low complexity. Positions 1015–1029 (SDLNSPASTPSTCRP) are enriched in polar residues. Short sequence motifs (LXXLL motif) lie at residues 1165–1169 (LMLLL) and 1254–1258 (LRMLL). Disordered regions lie at residues 1451-1574 (LTQR…DGDS) and 1948-1983 (NSPT…HDES). Composition is skewed to low complexity over residues 1458–1467 (SSSQTSSSSS), 1476–1502 (TPTT…SSSS), and 1522–1538 (GAQG…QSAG). Residues 1542 to 1552 (DATSATSQPQV) show a composition bias toward polar residues. Positions 1973–1983 (GTDRMESHDES) are enriched in basic and acidic residues.

The protein belongs to the Mediator complex subunit 13 family. In terms of assembly, component of the Mediator complex.

It localises to the nucleus. Its function is as follows. Component of the Mediator complex, a coactivator involved in regulated gene transcription of nearly all RNA polymerase II-dependent genes. Mediator functions as a bridge to convey information from gene-specific regulatory proteins to the basal RNA polymerase II transcription machinery. Mediator is recruited to promoters by direct interactions with regulatory proteins and serves as a scaffold for the assembly of a functional preinitiation complex with RNA polymerase II and the general transcription factors. This Danio rerio (Zebrafish) protein is Mediator of RNA polymerase II transcription subunit 13-like.